Reading from the N-terminus, the 402-residue chain is S-adenosylmethionine synthase (402 aa).

An ATP-binding site is contributed by His-15. Asp-17 lines the Mg(2+) pocket. Residue Glu-43 participates in K(+) binding. The L-methionine site is built by Glu-56 and Gln-99. The interval 99–109 (QSPDIAQGVDT) is flexible loop. Residues 174–176 (DGK), 247–248 (RF), Asp-256, 262–263 (RK), Ala-279, and Lys-283 contribute to the ATP site. Asp-256 contacts L-methionine. L-methionine is bound at residue Lys-287.

It belongs to the AdoMet synthase family. Homotetramer; dimer of dimers. Mg(2+) is required as a cofactor. The cofactor is K(+).

Its subcellular location is the cytoplasm. The catalysed reaction is L-methionine + ATP + H2O = S-adenosyl-L-methionine + phosphate + diphosphate. It participates in amino-acid biosynthesis; S-adenosyl-L-methionine biosynthesis; S-adenosyl-L-methionine from L-methionine: step 1/1. Functionally, catalyzes the formation of S-adenosylmethionine (AdoMet) from methionine and ATP. The overall synthetic reaction is composed of two sequential steps, AdoMet formation and the subsequent tripolyphosphate hydrolysis which occurs prior to release of AdoMet from the enzyme. This Streptomyces griseus subsp. griseus (strain JCM 4626 / CBS 651.72 / NBRC 13350 / KCC S-0626 / ISP 5235) protein is S-adenosylmethionine synthase.